Consider the following 618-residue polypeptide: DNA mismatch repair protein MutL (618 aa).

A compositionally biased stretch (low complexity) spans A366–R378. The tract at residues A366 to Y403 is disordered. Residues A383–S392 show a composition bias toward gly residues.

This sequence belongs to the DNA mismatch repair MutL/HexB family.

Its function is as follows. This protein is involved in the repair of mismatches in DNA. It is required for dam-dependent methyl-directed DNA mismatch repair. May act as a 'molecular matchmaker', a protein that promotes the formation of a stable complex between two or more DNA-binding proteins in an ATP-dependent manner without itself being part of a final effector complex. In Salmonella typhi, this protein is DNA mismatch repair protein MutL.